Here is a 146-residue protein sequence, read N- to C-terminus: Core protein D2 (146 aa).

It belongs to the orthopoxvirus OPG114 family. As to quaternary structure, part of a complex composed of the kinase OPG054, OPG092, OPG100, OPG114, OPG115, OPG142 and OPG157.

The protein resides in the virion. Late protein which is part of a large complex required for early virion morphogenesis. This complex participates in the formation of virosomes and the incorporation of virosomal contents into nascent immature virions. This Homo sapiens (Human) protein is Core protein D2 (OPG114).